Reading from the N-terminus, the 1195-residue chain is ATP-dependent DNA helicase Hel308 (1195 aa).

ATP is bound by residues Gln-20 and 39–46; that span reads IPTASGKT. Positions 26–196 constitute a Helicase ATP-binding domain; sequence RGLLDKNKNF…WLNAELIVDD (171 aa). Residues 143-146 carry the DEAH box motif; sequence DEIH. The DOD-type homing endonuclease domain occupies 451–584; it reads FIGYFIGDGY…LQFVLLRFGI (134 aa).

It belongs to the helicase family. Hel308 subfamily. In terms of assembly, monomer. This protein undergoes a protein self splicing that involves a post-translational excision of the intervening region (intein) followed by peptide ligation.

It carries out the reaction Couples ATP hydrolysis with the unwinding of duplex DNA by translocating in the 3'-5' direction.. The catalysed reaction is ATP + H2O = ADP + phosphate + H(+). DNA-dependent ATPase and 3'-5' DNA helicase that may be involved in repair of stalled replication forks. This chain is ATP-dependent DNA helicase Hel308, found in Methanocaldococcus jannaschii (strain ATCC 43067 / DSM 2661 / JAL-1 / JCM 10045 / NBRC 100440) (Methanococcus jannaschii).